The following is a 117-amino-acid chain: Mitochondrial zinc maintenance protein 1, mitochondrial (117 aa).

The transit peptide at 1–10 (MSATLSAYRN) directs the protein to the mitochondrion. A disordered region spans residues 91-117 (NESIKQGKKNLGSLAGKKGSSIRSCKD).

This sequence belongs to the complex I LYR family. MZM1 subfamily. As to quaternary structure, interacts with RIP1.

Its subcellular location is the mitochondrion matrix. Functionally, assembly factor required for Rieske Fe-S protein RIP1 incorporation into the cytochrome b-c1 (CIII) complex. Functions as a chaperone, binding to this subunit within the mitochondrial matrix and stabilizing it prior to its translocation and insertion into the late CIII dimeric intermediate within the mitochondrial inner membrane. Modulates the mitochondrial matrix zinc pool. The polypeptide is Mitochondrial zinc maintenance protein 1, mitochondrial (MZM1) (Candida tropicalis (strain ATCC MYA-3404 / T1) (Yeast)).